Reading from the N-terminus, the 119-residue chain is Developmental pluripotency-associated protein 5B/5C (119 aa).

In terms of domain architecture, KH; atypical spans 24 to 86; sequence PEVFQVQSLV…SIKVRAKWLL (63 aa).

This sequence belongs to the KHDC1 family.

Its subcellular location is the cytoplasm. In terms of biological role, involved in the maintenance of embryonic stem (ES) cell pluripotency. Dispensable for self-renewal of pluripotent ES cells and establishment of germ cells. Associates with specific target mRNAs. This is Developmental pluripotency-associated protein 5B/5C from Mus musculus (Mouse).